We begin with the raw amino-acid sequence, 87 residues long: Large ribosomal subunit protein bL31B (87 aa).

Belongs to the bacterial ribosomal protein bL31 family. Type B subfamily. Part of the 50S ribosomal subunit.

In Paraburkholderia phymatum (strain DSM 17167 / CIP 108236 / LMG 21445 / STM815) (Burkholderia phymatum), this protein is Large ribosomal subunit protein bL31B.